Consider the following 498-residue polypeptide: Glutamate--tRNA ligase (498 aa).

The short motif at 11–21 (PSPTGHLHIGN) is the 'HIGH' region element. A 'KMSKS' region motif is present at residues 261 to 265 (KLSKR). Lys264 is a binding site for ATP.

The protein belongs to the class-I aminoacyl-tRNA synthetase family. Glutamate--tRNA ligase type 1 subfamily. Monomer.

The protein localises to the cytoplasm. The enzyme catalyses tRNA(Glu) + L-glutamate + ATP = L-glutamyl-tRNA(Glu) + AMP + diphosphate. Its function is as follows. Catalyzes the attachment of glutamate to tRNA(Glu) in a two-step reaction: glutamate is first activated by ATP to form Glu-AMP and then transferred to the acceptor end of tRNA(Glu). The chain is Glutamate--tRNA ligase from Oenococcus oeni (strain ATCC BAA-331 / PSU-1).